Here is a 358-residue protein sequence, read N- to C-terminus: Cyclin-dependent kinase 10 (358 aa).

Residues 37-321 enclose the Protein kinase domain; it reads FEKLNRIGEG…AGDCLESSYF (285 aa). ATP is bound by residues 43 to 51 and K66; that span reads IGEGTYGIV. D161 serves as the catalytic Proton acceptor. T194 carries the post-translational modification Phosphothreonine. Residues 332–358 form a disordered region; sequence LMPTFPHHRNKRAAPAATEGQSKRCRP.

Belongs to the protein kinase superfamily. CMGC Ser/Thr protein kinase family. CDC2/CDKX subfamily. Heterodimer with CCNQ, the interaction is required for kinase activity. Interacts with ETS2. Interacts with PRK2.

It localises to the cytoplasm. It is found in the cytoskeleton. Its subcellular location is the cilium basal body. The enzyme catalyses L-seryl-[protein] + ATP = O-phospho-L-seryl-[protein] + ADP + H(+). It carries out the reaction L-threonyl-[protein] + ATP = O-phospho-L-threonyl-[protein] + ADP + H(+). In terms of biological role, cyclin-dependent kinase that phosphorylates the transcription factor ETS2 (in vitro) and positively controls its proteasomal degradation (in cells). Involved in the regulation of actin cytoskeleton organization through the phosphorylation of actin dynamics regulators such as PKN2. Is a negative regulator of ciliogenesis through phosphorylation of PKN2 and promotion of RhoA signaling. The sequence is that of Cyclin-dependent kinase 10 (Cdk10) from Rattus norvegicus (Rat).